The chain runs to 359 residues: Endosome-associated-trafficking regulator 1 (359 aa).

2 positions are modified to phosphoserine: serine 18 and serine 74. The tract at residues 100–125 (LLDEDEDEEDGWNGAYLPSAMEQTHS) is required for interaction with PTPN13. Residues 153–180 (SLPPWTLSDSDSRISPTGSPSADFTAHG) are disordered. The span at 159-174 (LSDSDSRISPTGSPSA) shows a compositional bias: polar residues. Residues serine 167 and serine 171 each carry the phosphoserine modification. The stretch at 185–295 (DRHLRTLQIS…FKRENEALRS (111 aa)) forms a coiled coil.

Belongs to the ENTR1 family. In terms of assembly, found in a complex with ENTR1, PTPN13 and GIT1. Interacts with PTPN13 (via the FERM domain). Interacts (via N-terminus) with GIT1 (via N- and C-terminus); this interaction is direct. Interacts with NOD2. Interacts (via N-terminus) with IFT88. Interacts with VPS35. Phosphorylated.

It is found in the cytoplasm. The protein localises to the early endosome. It localises to the endosome. Its subcellular location is the recycling endosome. The protein resides in the midbody. It is found in the cytoskeleton. The protein localises to the microtubule organizing center. It localises to the centrosome. Its subcellular location is the cilium basal body. Its function is as follows. Endosome-associated protein that plays a role in membrane receptor sorting, cytokinesis and ciliogenesis. Involved in the endosome-to-plasma membrane trafficking and recycling of SNX27-retromer-dependent cargo proteins, such as GLUT1. Involved in the regulation of cytokinesis; the function may involve PTPN13 and GIT1. Plays a role in the formation of cilia. Involved in cargo protein localization, such as PKD2, at primary cilia. Involved in the presentation of the tumor necrosis factor (TNF) receptor TNFRSF1A on the cell surface, and hence in the modulation of the TNF-induced apoptosis. This is Endosome-associated-trafficking regulator 1 from Bos taurus (Bovine).